A 569-amino-acid polypeptide reads, in one-letter code: Putative diguanylate cyclase DgcQ (569 aa).

Helical transmembrane passes span 25–45 (LGPGHVVNLCFIVVLLFSTLL) and 365–385 (IALTLLWALFTTMLLLSWYVI). Residues 433 to 568 (HPFSVIQVDL…GRNRVFASDN (136 aa)) enclose the GGDEF domain. Mg(2+) is bound at residue Asp441. Residues Asn449, His454, and Asp458 each coordinate substrate. Glu484 contributes to the Mg(2+) binding site. Glu484 functions as the Proton acceptor in the catalytic mechanism.

In terms of assembly, homodimer. Mg(2+) serves as cofactor.

The protein resides in the cell inner membrane. It catalyses the reaction 2 GTP = 3',3'-c-di-GMP + 2 diphosphate. The protein operates within glycan metabolism; bacterial cellulose biosynthesis. It participates in purine metabolism; 3',5'-cyclic di-GMP biosynthesis. Functionally, catalyzes the synthesis of cyclic-di-GMP (c-di-GMP) via the condensation of 2 GTP molecules. Cyclic-di-GMP is a second messenger which controls cell surface-associated traits in bacteria. Involved in the regulation of cellulose production. In Shigella flexneri, this protein is Putative diguanylate cyclase DgcQ.